The primary structure comprises 379 residues: Polycomb group protein FIE2 (379 aa).

WD repeat units follow at residues 85–128, 131–171, 177–217, 243–280, 292–333, and 340–378; these read DKDE…LAKS, GHGD…CILI, GHRN…LYVD, VHSN…QSPG, VPEC…PVLI, and QCKS…PSSR.

The protein belongs to the WD repeat ESC family. Widely expressed. Expressed in the embryo sac before pollination. After pollination, its expression persists, predominantly in the embryo and at lower levels in the endosperm.

It is found in the nucleus. Polycomb group (PcG) protein. PcG proteins act by forming multiprotein complexes, which are required to maintain the transcriptionally repressive state of homeotic genes throughout development. PcG proteins are not required to initiate repression, but to maintain it during later stages of development. They probably act via the methylation of histones, rendering chromatin heritably changed in its expressibility. This chain is Polycomb group protein FIE2 (FIE2), found in Zea mays (Maize).